We begin with the raw amino-acid sequence, 134 residues long: MALKIRLARAGSKKRPYYHVVVADVRAPRDGRFIETVGSWNPVLLKDAERVKLDAERIQHWIAQGAQPTDRVLRFLDQAGIAKRPSRNNPTKGEPGKKAQERLALAKQAEEEAAAKAAEAAAAAAAPAEEAASE.

A disordered region spans residues 79–134; sequence AGIAKRPSRNNPTKGEPGKKAQERLALAKQAEEEAAAKAAEAAAAAAAPAEEAASE. Residues 115-134 show a composition bias toward low complexity; it reads AKAAEAAAAAAAPAEEAASE.

The protein belongs to the bacterial ribosomal protein bS16 family.

The chain is Small ribosomal subunit protein bS16 from Brucella suis (strain ATCC 23445 / NCTC 10510).